Here is a 684-residue protein sequence, read N- to C-terminus: MSAQDFLVELGTEELPPKALASLGDAFLAGIEKGLQAAGLNYTGKQVYAAPRRLAVLIRQLDVQQPDRSINIDGPPLQAAFNAEGEPTQAALGFAKKCGVELAEIDQSGPKLRFSQHIPGKATVGLLPTIVEDSLNDLPIPKRMRWAASREEFVRPTQWLVMLLGDQVVDCTILSQKAGRESRGHRFHHPENVLITTPANYVEDLRKAYVLADFAERRELISKRTAELAMQQEGTAIVPPALLDEVTALVEWPVPLVCSFEERFLEVPQEALITTMQDNQKYFCLLDSEGKLLPRFITVANVESRDPKQIVQGNEKVVRPRLTDAEFFFKQDKKQPLETFNERLKNVVFQAQLGTVYDKAERVSRLAAFIAPLIGGDAQRAGRAGLLSKCDLATEMVGEFPEMQGVAGYYYALNDGEPEDVALALNEQYMPRGAGAELPQTLTGAAVAIADKLDTLVGIFGIGMLPTGSKDPYALRRAALGVLRILIEKQLDLDLTGAVEFAVKQFGAKIKAPGLAEQVLEFIFDRLRARYEDEGIDVATYLSVRALQPGSALDFDQRVQAVQAFRKLPEAEALAAVNKRVSNLLSKAEGAIAEQVEPKYFDNANEFSLYSAIQQADQAVQPMAAARQYSESLARLAALRDPVDAFFEAVMVNAEDAKVRANRYALLSRLRGLFLGVADISLLG.

Belongs to the class-II aminoacyl-tRNA synthetase family. In terms of assembly, tetramer of two alpha and two beta subunits.

The protein localises to the cytoplasm. The catalysed reaction is tRNA(Gly) + glycine + ATP = glycyl-tRNA(Gly) + AMP + diphosphate. This is Glycine--tRNA ligase beta subunit from Pseudomonas putida (strain ATCC 47054 / DSM 6125 / CFBP 8728 / NCIMB 11950 / KT2440).